The primary structure comprises 177 residues: Eggshell protein (177 aa).

Residues 1–18 (MKQSLTLVFLVAIGYATA) form the signal peptide. 5 consecutive repeat copies span residues 25–41 (YSGG…CDSG), 42–59 (YGDS…CGGG), 60–75 (YGGG…DCGN), 76–91 (YGGG…DCGN), and 92–112 (YGGG…CGGG). Residues 25-112 (YSGGYGGGCY…GCSGGNCGGG (88 aa)) form a 5 X approximate tandem repeats region. Gly residues predominate over residues 149-166 (GSGKGKGGGKGGKGGKGG). The disordered stretch occupies residues 149-177 (GSGKGKGGGKGGKGGKGGTYKPSHYGGGY).

This Schistosoma mansoni (Blood fluke) protein is Eggshell protein.